Consider the following 588-residue polypeptide: Beta-(1--&gt;2)glucan export ATP-binding/permease protein NdvA (588 aa).

An ABC transmembrane type-1 domain is found at 21–301 (VAVVVIANVI…MRQFVTQIFE (281 aa)). The next 6 helical transmembrane spans lie at 22 to 42 (AVVVIANVILAAITIAEPVLF), 57 to 77 (PILILWAGFGVFNTVAYVAVA), 136 to 156 (THLATFVALVLLIPTAMAMDL), 158 to 178 (LSFVLIGLGIVYWFIGKWVMG), 248 to 268 (TASTVSMMIILVIGTVLVKNG), and 272 to 292 (VGDVIAFIGFANLLIGRLDQM). The ABC transporter domain occupies 335–569 (VEFRNINFGF…GGRFTSLLRT (235 aa)). Position 368 to 375 (368 to 375 (GPTGAGKT)) interacts with ATP.

Belongs to the ABC transporter superfamily. Beta-(1--&gt;2)glucan exporter (TC 3.A.1.108.1) family. As to quaternary structure, homodimer.

The protein resides in the cell inner membrane. It carries out the reaction [(1-&gt;2)-beta-D-glucosyl](n)(in) + ATP + H2O = [(1-&gt;2)-beta-D-glucosyl](n)(out) + ADP + phosphate + H(+). Its function is as follows. Involved in beta-(1--&gt;2)glucan export which is required for crown gall tumor formation. Transmembrane domains (TMD) form a pore in the inner membrane and the ATP-binding domain (NBD) is responsible for energy generation. The sequence is that of Beta-(1--&gt;2)glucan export ATP-binding/permease protein NdvA from Rhizobium radiobacter (Agrobacterium tumefaciens).